Here is a 309-residue protein sequence, read N- to C-terminus: Acetolactate synthase small subunit, mitochondrial (309 aa).

The transit peptide at 1–24 (MLRSLLQSGHRRVVASSCATMVRC) directs the protein to the mitochondrion. One can recognise an ACT domain in the interval 79 to 159 (VLNCLVQNEP…DYTNSEIIKR (81 aa)).

It belongs to the acetolactate synthase small subunit family. The acetolactate synthase complex contains the catalytic regulatory subunit ILV2 and the regulatory small subunit ILV6.

The protein resides in the mitochondrion. It participates in amino-acid biosynthesis; L-isoleucine biosynthesis; L-isoleucine from 2-oxobutanoate: step 1/4. It functions in the pathway amino-acid biosynthesis; L-valine biosynthesis; L-valine from pyruvate: step 1/4. Regulatory subunit of mitochondrial acetolactate synthase, which catalyzes the first of a series of common steps in the biosynthesis of the branched-chain amino acids. Stimulates activity of the acetolactate synthase catalytic subunit ILV2 seven- to tenfold and confers sensitivity to inhibition by valine and activation by ATP. In Saccharomyces cerevisiae (strain ATCC 204508 / S288c) (Baker's yeast), this protein is Acetolactate synthase small subunit, mitochondrial (ILV6).